Here is a 40-residue protein sequence, read N- to C-terminus: Natriuretic peptide PpNP-b (40 aa).

The propeptide occupies 1–8 (SGSKTANI). A disulfide bond links Cys-12 and Cys-28. The segment at 20–40 (IGTTSGMGCGRPRPKPTPGGS) is disordered.

Belongs to the natriuretic peptide family. As to expression, expressed by the venom gland.

It localises to the secreted. Snake venom natriuretic peptide that targets both NPR1 and NPR2. Exhibits hypotensive and vasodepressor activities. The chain is Natriuretic peptide PpNP-b from Pseudechis porphyriacus (Red-bellied black snake).